The sequence spans 749 residues: Protein lin-54 homolog (749 aa).

Residue Lys139 forms a Glycyl lysine isopeptide (Lys-Gly) (interchain with G-Cter in SUMO2) linkage. Lys244 and Lys249 each carry N6-acetyllysine. Phosphoserine occurs at positions 264, 282, 310, and 314. Lys357 is covalently cross-linked (Glycyl lysine isopeptide (Lys-Gly) (interchain with G-Cter in SUMO2)). The interval 369–388 is disordered; sequence ASSSTQPVSQNPSTNTQPLQ. Residues 521 to 634 form the CRC domain; sequence PRKPCNCTKS…KCIGCKNFEE (114 aa). Residues 523–536 form a DNA-binding region; it reads KPCNCTKSLCLKLY. 9 residues coordinate Zn(2+): Cys525, Cys527, Cys532, Cys537, Cys539, Cys546, Cys549, Cys551, and Cys554. Positions 583-596 are linker; the sequence is IGKGKEGESDRRHS. Zn(2+)-binding residues include Cys599, Cys601, Cys606, Cys611, Cys613, Cys620, Cys624, Cys626, and Cys629. Residues 599–612 form a DNA-binding region; it reads CNCKRSGCLKNYCE. Phosphoserine is present on Ser635. Glycyl lysine isopeptide (Lys-Gly) (interchain with G-Cter in SUMO2) cross-links involve residues Lys639, Lys659, and Lys661.

This sequence belongs to the lin-54 family. As to quaternary structure, component of the DREAM complex (also named LINC complex) at least composed of E2F4, E2F5, LIN9, LIN37, LIN52, LIN54, MYBL1, MYBL2, RBL1, RBL2, RBBP4, TFDP1 and TFDP2. The complex exists in quiescent cells where it represses cell cycle-dependent genes. It dissociates in S phase when LIN9, LIN37, LIN52 and LIN54 form a subcomplex that binds to MYBL2.

It is found in the nucleus. Functionally, component of the DREAM complex, a multiprotein complex that can both act as a transcription activator or repressor depending on the context. In G0 phase, the complex binds to more than 800 promoters and is required for repression of E2F target genes. In S phase, the complex selectively binds to the promoters of G2/M genes whose products are required for mitosis and participates in their cell cycle dependent activation. In the complex, acts as a DNA-binding protein that binds the promoter of CDK1 in a sequence-specific manner. Specifically recognizes the consensus motif 5'-TTYRAA-3' in target DNA. This Homo sapiens (Human) protein is Protein lin-54 homolog (LIN54).